A 455-amino-acid polypeptide reads, in one-letter code: Serine--tRNA ligase (455 aa).

Residue Thr-252 to Glu-254 participates in L-serine binding. ATP contacts are provided by residues Arg-283–Glu-285 and Val-299. Residue Glu-306 coordinates L-serine. Position 370–373 (Glu-370–Ser-373) interacts with ATP. Thr-406 is an L-serine binding site.

Belongs to the class-II aminoacyl-tRNA synthetase family. Type-1 seryl-tRNA synthetase subfamily. In terms of assembly, homodimer. The tRNA molecule binds across the dimer.

The protein resides in the cytoplasm. The catalysed reaction is tRNA(Ser) + L-serine + ATP = L-seryl-tRNA(Ser) + AMP + diphosphate + H(+). It catalyses the reaction tRNA(Sec) + L-serine + ATP = L-seryl-tRNA(Sec) + AMP + diphosphate + H(+). The protein operates within aminoacyl-tRNA biosynthesis; selenocysteinyl-tRNA(Sec) biosynthesis; L-seryl-tRNA(Sec) from L-serine and tRNA(Sec): step 1/1. Its function is as follows. Catalyzes the attachment of serine to tRNA(Ser). Is also able to aminoacylate tRNA(Sec) with serine, to form the misacylated tRNA L-seryl-tRNA(Sec), which will be further converted into selenocysteinyl-tRNA(Sec). This Thermococcus sibiricus (strain DSM 12597 / MM 739) protein is Serine--tRNA ligase.